The sequence spans 531 residues: MLQDIVEQWQIMQQALAPLRLTRWQLTKMFAAQVYRDHPVGALLGISLSVVLLLWVISVVTRPKKLEDVLGLPVLGGSRTLKSDFLRIIEEGKQRYPDTPYIVNASGLQYVVYPPIFFDEIKRLTEQEASAQDFFHTVTYGQWTHIGAETDALWKTIAVDLARSVPVKVPSKQKDARIAFDKYVGYCPESKPVTIFDTMMKIVATTNACSFVGREVGTGEWPQVVQQLPMSVYFAVMTLSIVPRIFRPVLLPIVLIPALLVQRKMRKILAPGIRQDMEEYERAADRKELLKPTEDGKLPFTQWLMARYKPGEATAHQLATDHLLTSFESTVSTAATLYNMILDLAVRPELQDELRQEVEEIMVDGKLPATHLKELKKMDSMMRETFRVNPFALFSLYRITRKPIQLSSGPKLPAGTILCVDSHHINNSAELFPEPAKFDPYRFLKKREEPGAENRFQFVSTGPTDPNWGDGTQACPGRFFANSTLKVCLAHVLLKYNVSLREGQERPKMVSMPNGIWAPDMAAQVLFQSRD.

The chain crosses the membrane as a helical span at residues 40 to 60 (VGALLGISLSVVLLLWVISVV). A heme-binding site is contributed by C475.

It belongs to the cytochrome P450 family. It depends on heme as a cofactor.

It is found in the membrane. It functions in the pathway mycotoxin biosynthesis. Its function is as follows. Cytochrome P450 monooxygenase; part of the gene cluster that mediates the biosynthesis of the cytotoxic leucine-containing cytochalasans, including aspochalasin C, aspochalasin E, TMC-169, flavichalasine F, aspergillin PZ, aspochalasin M and flavichalasine G. The first step in the pathway is catalyzed by the hybrid PKS-NRPS ffsA that utilizes 8 units of malonyl-CoA to iteratively assemble the octaketide chain before addition of L-leucine by the C-terminal NRPS modules. Because ffsA lacks a designated enoylreductase (ER) domain, the required activity is provided the enoyl reductase fssC. The methyltransferase (MT) domain of ffsA catalyzes the alpha-methylation at C10 and C14 using S-adenosyl-L-methionine as the methyl-donating cosubstrate. Reduction by the hydrolyase ffsE, followed by dehydration and intra-molecular Diels-Alder cyclization by the Diels-Alderase ffsF then yield the required isoindolone-fused macrocycle. A number of oxidative steps catalyzed by the tailoring cytochrome P450 monooxygenase ffsD, the FAD-linked oxidoreductase ffsJ and the short-chain dehydrogenase/reductase ffsI, are further required to afford the final products. In Aspergillus flavipes, this protein is Cytochrome P450 monooxygenase ffsD.